The primary structure comprises 377 residues: dTDP-fucopyranose mutase (377 aa).

FAD-binding positions include Ser12, 31–32 (DD), Asn39, 58–59 (HI), Arg348, and 355–360 (LDMDVC).

It belongs to the UDP-galactopyranose/dTDP-fucopyranose mutase family. FAD serves as cofactor.

The enzyme catalyses dTDP-alpha-D-fucose = dTDP-alpha-D-fucofuranose. Its pathway is bacterial outer membrane biogenesis; LPS O-antigen biosynthesis. Its activity is regulated as follows. Inhibited by Cu(2+), while other divalent cations such as Ca(2+), Co(2+), Fe(2+) and Mg(2+) have no obvious effects on enzyme activity. Functionally, catalyzes the conversion of dTDP-alpha-D-fucopyranose to dTDP-alpha-D-fucofuranose. This is a step in the biosynthesis of D-fucofuranose, a component of E.coli O52 O antigen. In Escherichia coli, this protein is dTDP-fucopyranose mutase (fcf2).